The following is a 543-amino-acid chain: Hydroxylamine reductase (543 aa).

4 residues coordinate [4Fe-4S] cluster: C5, C8, C17, and C23. H250, E274, C318, C410, C438, C463, E498, and K500 together coordinate hybrid [4Fe-2O-2S] cluster. A Cysteine persulfide modification is found at C410.

It belongs to the HCP family. It depends on [4Fe-4S] cluster as a cofactor. Hybrid [4Fe-2O-2S] cluster is required as a cofactor.

It localises to the cytoplasm. It catalyses the reaction A + NH4(+) + H2O = hydroxylamine + AH2 + H(+). Catalyzes the reduction of hydroxylamine to form NH(3) and H(2)O. In Petrotoga mobilis (strain DSM 10674 / SJ95), this protein is Hydroxylamine reductase.